Reading from the N-terminus, the 559-residue chain is Suppressor of tumorigenicity 7 protein-like (559 aa).

A run of 3 helical transmembrane segments spans residues 39–59 (GLAN…LYAL), 83–103 (FYVA…IFEW), and 513–533 (LPFF…LAFL).

Belongs to the ST7 family. In terms of tissue distribution, ubiquitously expressed.

It is found in the membrane. This chain is Suppressor of tumorigenicity 7 protein-like (St7l), found in Mus musculus (Mouse).